The chain runs to 607 residues: UvrABC system protein C (607 aa).

The region spanning 16 to 94 (ARPGVYRMFD…IKQWRPPYNI (79 aa)) is the GIY-YIG domain. A UVR domain is found at 203-238 (QQLGNELNAEMEKAAMALNFEKAAELRDQIALLRRV).

The protein belongs to the UvrC family. In terms of assembly, interacts with UvrB in an incision complex.

Its subcellular location is the cytoplasm. Its function is as follows. The UvrABC repair system catalyzes the recognition and processing of DNA lesions. UvrC both incises the 5' and 3' sides of the lesion. The N-terminal half is responsible for the 3' incision and the C-terminal half is responsible for the 5' incision. The sequence is that of UvrABC system protein C from Pseudomonas putida (strain W619).